The primary structure comprises 366 residues: 3-dehydroquinate synthase (366 aa).

Residues 107–111, 131–132, K144, and K153 each bind NAD(+); these read GVIGD and TS. Residues E186, H251, and H268 each contribute to the Zn(2+) site.

It belongs to the sugar phosphate cyclases superfamily. Dehydroquinate synthase family. It depends on Co(2+) as a cofactor. Zn(2+) serves as cofactor. The cofactor is NAD(+).

The protein localises to the cytoplasm. It carries out the reaction 7-phospho-2-dehydro-3-deoxy-D-arabino-heptonate = 3-dehydroquinate + phosphate. It functions in the pathway metabolic intermediate biosynthesis; chorismate biosynthesis; chorismate from D-erythrose 4-phosphate and phosphoenolpyruvate: step 2/7. Its function is as follows. Catalyzes the conversion of 3-deoxy-D-arabino-heptulosonate 7-phosphate (DAHP) to dehydroquinate (DHQ). The protein is 3-dehydroquinate synthase of Rippkaea orientalis (strain PCC 8801 / RF-1) (Cyanothece sp. (strain PCC 8801)).